We begin with the raw amino-acid sequence, 573 residues long: BICD family-like cargo adapter 1 (573 aa).

The disordered stretch occupies residues 67–97; the sequence is ERPSDPGEHPQAEPGSLAEGAGPQPPPSQDP. The span at 68-77 shows a compositional bias: basic and acidic residues; it reads RPSDPGEHPQ. The CC1 box motif lies at 113–117; sequence AARLG. Residues 118 to 376 adopt a coiled-coil conformation; the sequence is KALLERNQDM…QLWEAYCQVR (259 aa). A disordered region spans residues 386 to 412; the sequence is DSADSAVSTDSSMDESSETSSAKDVPA. Positions 387-396 are enriched in low complexity; it reads SADSAVSTDS. Residues 440–525 adopt a coiled-coil conformation; the sequence is LSVEMTALKE…LEAWQDDMHR (86 aa).

The protein belongs to the BICDR family. Part of a tripartite complex with dynein and dynactin, acts an adapter linking the dynein motor complex and dynactin. Interacts with KIF1C. Interacts with RAB6A and RAB6B; interaction is specific to Rab6.

It localises to the cytoplasm. It is found in the cytoskeleton. The protein localises to the microtubule organizing center. The protein resides in the centrosome. In terms of biological role, acts as an adapter protein linking the dynein motor complex to various cargos and converts dynein from a non-processive to a highly processive motor in the presence of dynactin. Facilitates the interaction between dynein and dynactin and activates dynein processivity (the ability to move along a microtubule for a long distance without falling off the track). Predominantly recruits 2 dyneins, which increases both the force and speed of the microtubule motor. Component of secretory vesicle machinery in developing neurons that acts as a regulator of neurite outgrowth. Regulates the secretory vesicle transport by controlling the accumulation of Rab6-containing secretory vesicles in the pericentrosomal region restricting anterograde secretory transport during the early phase of neuronal differentiation, thereby inhibiting neuritogenesis. The sequence is that of BICD family-like cargo adapter 1 (BICDL1) from Homo sapiens (Human).